The sequence spans 279 residues: MQKAGRLLGGWTQAWMSVRMASSGLTRRNPLSNKVALVTASTDGIGFAIARRLAEDGAHVVVSSRKQQNVDRAVATLQGEGLSVTGIVCHVGKAEDREKLITTALKRHQGIDILVSNAAVNPFFGNLMDVTEEVWDKVLSINVTATAMMIKAVVPEMEKRGGGSVVIVGSVAGFTRFPSLGPYNVSKTALLGLTKNFAAELAPKNIRVNCLAPGLIKTRFSSVLWEEKAREDFIKEAMQIRRLGKPEDCAGIVSFLCSEDASYINGETVVVGGGTPSRL.

37–61 (LVTASTDGIGFAIARRLAEDGAHVV) lines the NADP(+) pocket. Residue Lys-93 is modified to N6-acetyllysine; alternate. Position 93 is an N6-succinyllysine; alternate (Lys-93). Lys-106 carries the post-translational modification N6-acetyllysine. Ser-170 is a binding site for substrate. Residue Tyr-183 is the Proton acceptor of the active site. Lys-187 contacts NADP(+). Lys-217 carries the N6-acetyllysine; alternate modification. Lys-217 is modified (N6-succinyllysine; alternate). At Ser-221 the chain carries Phosphoserine. Residues Lys-228 and Lys-235 each carry the N6-succinyllysine modification. The Peroxisomal targeting signal signature appears at 277 to 279 (SRL).

Belongs to the short-chain dehydrogenases/reductases (SDR) family. In terms of assembly, homotetramer.

It is found in the peroxisome. It catalyses the reaction a secondary alcohol + NADP(+) = a ketone + NADPH + H(+). The enzyme catalyses 3alpha-hydroxy-5beta-pregnan-20-one + NADP(+) = 5beta-pregnan-3,20-dione + NADPH + H(+). It carries out the reaction 5beta-dihydrotestosterone + NADPH + H(+) = 5beta-androstane-3alpha,17beta-diol + NADP(+). The catalysed reaction is all-trans-retinol + NADP(+) = all-trans-retinal + NADPH + H(+). It catalyses the reaction isatin + NADPH + H(+) = 3-hydroxyindolin-2-one + NADP(+). Its function is as follows. NADPH-dependent oxidoreductase which catalyzes the reduction of a variety of compounds bearing carbonyl groups including ketosteroids, alpha-dicarbonyl compounds, aldehydes, aromatic ketones and quinones. Reduces all-trans-retinal and 9-cis retinal. Reduces 3-ketosteroids and benzil into 3alpha-hydroxysteroids and S-benzoin, respectively, in contrast to the stereoselectivity of primates DHRS4s which produce 3beta-hydroxysteroids and R-benzoin. In the reverse reaction, catalyzes the NADP-dependent oxidation of 3alpha-hydroxysteroids and alcohol, but with much lower efficiency. Involved in the metabolism of 3alpha-hydroxysteroids, retinoid, isatin and xenobiotic carbonyl compounds. This is Dehydrogenase/reductase SDR family member 4 from Mus musculus (Mouse).